The primary structure comprises 151 residues: Large ribosomal subunit protein uL15 (151 aa).

The tract at residues 1 to 58 (MTSISLDSLKPNKGARKRKTRKGRGIAAGQGASCGFGMRGQKSRSGRPTRPGFEGGQM) is disordered. Positions 13-24 (KGARKRKTRKGR) are enriched in basic residues. Residues 26-38 (IAAGQGASCGFGM) show a composition bias toward gly residues.

Belongs to the universal ribosomal protein uL15 family. Part of the 50S ribosomal subunit.

Binds to the 23S rRNA. The chain is Large ribosomal subunit protein uL15 from Prochlorococcus marinus (strain SARG / CCMP1375 / SS120).